Consider the following 377-residue polypeptide: Lipoyl synthase, mitochondrial (377 aa).

Residues cysteine 103, cysteine 108, cysteine 114, cysteine 134, cysteine 138, cysteine 141, and serine 349 each contribute to the [4Fe-4S] cluster site. The Radical SAM core domain maps to 119-338 (EHGTQTATIM…EERGNELGFL (220 aa)).

This sequence belongs to the radical SAM superfamily. Lipoyl synthase family. The cofactor is [4Fe-4S] cluster.

It localises to the mitochondrion. It catalyses the reaction [[Fe-S] cluster scaffold protein carrying a second [4Fe-4S](2+) cluster] + N(6)-octanoyl-L-lysyl-[protein] + 2 oxidized [2Fe-2S]-[ferredoxin] + 2 S-adenosyl-L-methionine + 4 H(+) = [[Fe-S] cluster scaffold protein] + N(6)-[(R)-dihydrolipoyl]-L-lysyl-[protein] + 4 Fe(3+) + 2 hydrogen sulfide + 2 5'-deoxyadenosine + 2 L-methionine + 2 reduced [2Fe-2S]-[ferredoxin]. It functions in the pathway protein modification; protein lipoylation via endogenous pathway; protein N(6)-(lipoyl)lysine from octanoyl-[acyl-carrier-protein]: step 2/2. Catalyzes the radical-mediated insertion of two sulfur atoms into the C-6 and C-8 positions of the octanoyl moiety bound to the lipoyl domains of lipoate-dependent enzymes, thereby converting the octanoylated domains into lipoylated derivatives. The chain is Lipoyl synthase, mitochondrial from Drosophila melanogaster (Fruit fly).